We begin with the raw amino-acid sequence, 190 residues long: Cancer-related nucleoside-triphosphatase (190 aa).

An N-acetylalanine modification is found at Ala2. Residues 9 to 16 and 109 to 116 each bind ATP; these read GPPGVGKT and VCVIDEIG. Lys165 carries the post-translational modification N6-acetyllysine.

The protein belongs to the THEP1 NTPase family. In terms of assembly, monomer.

It carries out the reaction a ribonucleoside 5'-triphosphate + H2O = a ribonucleoside 5'-diphosphate + phosphate + H(+). It catalyses the reaction 5-methyl-UTP + H2O = 5-methyl-UDP + phosphate + H(+). The enzyme catalyses CTP + H2O = CDP + phosphate + H(+). The catalysed reaction is ATP + H2O = ADP + phosphate + H(+). It carries out the reaction GTP + H2O = GDP + phosphate + H(+). Functionally, has nucleotide phosphatase activity towards ATP, GTP, CTP, TTP and UTP. Hydrolyzes nucleoside diphosphates with lower efficiency. The polypeptide is Cancer-related nucleoside-triphosphatase (Homo sapiens (Human)).